A 203-amino-acid chain; its full sequence is EF-hand calcium-binding domain-containing protein 8 (203 aa).

Residues 61-107 (SSEKPGESPKPQKMAQPGGSQKKETSRSVPVTDPTSHNSEINQRDQQ) form a disordered region. Over residues 87–107 (RSVPVTDPTSHNSEINQRDQQ) the composition is skewed to polar residues. 2 EF-hand domains span residues 111 to 145 (MHLADLQKVFEKEADENGALKKEGFIRIMKGVLSS) and 146 to 181 (MSEEMLELLFLKVDSDCNGFVTWQKYVDYMMREFQG).

This chain is EF-hand calcium-binding domain-containing protein 8 (Efcab8), found in Mus musculus (Mouse).